Consider the following 86-residue polypeptide: Exodeoxyribonuclease 7 small subunit (86 aa).

Residues 1 to 27 form a disordered region; that stretch reads MQDELFETEKIPPKNTKNAKNAPKKSF.

It belongs to the XseB family. Heterooligomer composed of large and small subunits.

The protein localises to the cytoplasm. It carries out the reaction Exonucleolytic cleavage in either 5'- to 3'- or 3'- to 5'-direction to yield nucleoside 5'-phosphates.. Its function is as follows. Bidirectionally degrades single-stranded DNA into large acid-insoluble oligonucleotides, which are then degraded further into small acid-soluble oligonucleotides. This chain is Exodeoxyribonuclease 7 small subunit, found in Helicobacter pylori (strain G27).